We begin with the raw amino-acid sequence, 266 residues long: MISRITNKLQALKEYDEKALITYVTAGDPDLETTFDLVLAMEKAGADIIELGIPYSDPLADGPVIQRASQRALNAGANMEAIFELVIKLREKTQIPLVFLVYYNCVFKYGLETFLNRCQEIGIDGLIIPDLPLEERRELQVMMQQYPMDLIPLVAPTSEDRMKEIVQDAEGFIYCVSSTGVTGKRNSLAGNLEGFMQQLRTYTEIPLVIGFGISNSEMMDKLKNICDGFIIGSAVIEKIEAGLEDRSSVERVSKFIEKLYEFKNLG.

Active-site proton acceptor residues include glutamate 50 and aspartate 61.

Belongs to the TrpA family. In terms of assembly, tetramer of two alpha and two beta chains.

It carries out the reaction (1S,2R)-1-C-(indol-3-yl)glycerol 3-phosphate + L-serine = D-glyceraldehyde 3-phosphate + L-tryptophan + H2O. Its pathway is amino-acid biosynthesis; L-tryptophan biosynthesis; L-tryptophan from chorismate: step 5/5. Functionally, the alpha subunit is responsible for the aldol cleavage of indoleglycerol phosphate to indole and glyceraldehyde 3-phosphate. The sequence is that of Tryptophan synthase alpha chain from Alkaliphilus metalliredigens (strain QYMF).